A 335-amino-acid polypeptide reads, in one-letter code: MEPGSQQQPSAPGQQPPPVGHQIVHVRTDSETDLETLFNAVMNPKNANVPQTLPMRMRKLPDSFFKQPEPKSHSRHVDQTTTWQDPRKAMLSQINITAPTSPPVQQNIMTPTAMNQQRLSQSAPVKSPPALQPQSPPSGVLGSGGNQQMRLQQLQMEKERLRLKHQELLRQVRPQELALRSQIPPMEQDSGPPNPVCSSGISQELRTMTMNSSDPFLNSGTYHSRDESTDSGLSMSSYSVPRTPDDFLNSVDEMDTGEAITQSTIPTQQNRFPDYLETLPGTNVDLGTLEGEAMNVEGEELMPSLQEALSSDILNDMETVLAATKLDKESFLTWL.

The segment covering Met-1–Gly-13 has biased composition (low complexity). The segment at Met-1 to His-21 is disordered. Ser-30 carries the post-translational modification Phosphoserine; by LATS1 and LATS2. Residues Met-114 to Pro-124 are compositionally biased toward polar residues. Residues Met-114–Asn-146 are disordered. Over residues Lys-126–Pro-136 the composition is skewed to pro residues. The interval Pro-137 to Leu-335 is transactivation domain. Residues Gly-145 to Arg-173 adopt a coiled-coil conformation.

It belongs to the YAP1 family. Post-translationally, phosphorylated by lats1 and lats2; leading to cytoplasmic translocation and inactivation.

It is found in the cytoplasm. The protein localises to the nucleus. The protein resides in the cell junction. It localises to the tight junction. Its subcellular location is the cell membrane. Its function is as follows. Transcriptional regulator which can act both as a coactivator and a corepressor and is the critical downstream regulatory target in the Hippo signaling pathway that plays a pivotal role in organ size control and tumor suppression by restricting proliferation and promoting apoptosis. Plays a key role in tissue tension and 3D tissue shape by regulating cortical actomyosin network formation. This is Transcriptional coactivator YAP1-B from Xenopus laevis (African clawed frog).